A 283-amino-acid polypeptide reads, in one-letter code: Pantothenate synthetase (283 aa).

33 to 40 is an ATP binding site; it reads MGALHEGH. The Proton donor role is filled by His40. A (R)-pantoate-binding site is contributed by Gln64. Gln64 lines the beta-alanine pocket. Residue 150-153 coordinates ATP; sequence GEKD. Gln156 lines the (R)-pantoate pocket. ATP is bound by residues Ile179 and 187 to 190; that span reads MSSR.

The protein belongs to the pantothenate synthetase family. As to quaternary structure, homodimer.

It is found in the cytoplasm. It carries out the reaction (R)-pantoate + beta-alanine + ATP = (R)-pantothenate + AMP + diphosphate + H(+). Its pathway is cofactor biosynthesis; (R)-pantothenate biosynthesis; (R)-pantothenate from (R)-pantoate and beta-alanine: step 1/1. Its function is as follows. Catalyzes the condensation of pantoate with beta-alanine in an ATP-dependent reaction via a pantoyl-adenylate intermediate. This is Pantothenate synthetase from Mesorhizobium japonicum (strain LMG 29417 / CECT 9101 / MAFF 303099) (Mesorhizobium loti (strain MAFF 303099)).